A 215-amino-acid chain; its full sequence is Probable glutathione S-transferase GSTF2 (215 aa).

Residues 2 to 83 (APMKLYGSTL…YVCRKNKPEL (82 aa)) enclose the GST N-terminal domain. Glutathione contacts are provided by residues Ser12, 41-42 (HK), 54-55 (QV), and 67-68 (ES). One can recognise a GST C-terminal domain in the interval 88–215 (DLKESAMVDV…KVASLMKPPA (128 aa)).

It belongs to the GST superfamily. Phi family. In terms of tissue distribution, constitutively expressed in roots. Expressed in anthers, callus, panicles, sheaths and stems (at protein level).

It catalyses the reaction RX + glutathione = an S-substituted glutathione + a halide anion + H(+). Conjugation of reduced glutathione to a wide number of exogenous and endogenous hydrophobic electrophiles. This chain is Probable glutathione S-transferase GSTF2 (GSTF2), found in Oryza sativa subsp. japonica (Rice).